Reading from the N-terminus, the 290-residue chain is Type II restriction enzyme MjaIII (290 aa).

The protein belongs to the DpnII type II restriction endonuclease family.

The enzyme catalyses Endonucleolytic cleavage of DNA to give specific double-stranded fragments with terminal 5'-phosphates.. A P subtype restriction enzyme that recognizes the double-stranded sequence 5'-GATC-3'; the cleavage site is unknown. This chain is Type II restriction enzyme MjaIII (mjaIIIR), found in Methanocaldococcus jannaschii (strain ATCC 43067 / DSM 2661 / JAL-1 / JCM 10045 / NBRC 100440) (Methanococcus jannaschii).